A 354-amino-acid polypeptide reads, in one-letter code: 3'-5' exonuclease (354 aa).

The segment at 1–120 (MEKYLIKMPI…PSPEKEKPEK (120 aa)) is disordered. Residues 36-50 (TKKDTPKELKDKENA) show a composition bias toward basic and acidic residues. Residues 59–70 (TKGRPGRPAVKR) show a composition bias toward basic residues. The span at 71–91 (KNLDNPDAKAEKKATEEENPP) shows a compositional bias: basic and acidic residues. Phosphoserine occurs at positions 104, 110, and 112. The 3'-5' exonuclease domain occupies 146 to 314 (VLQWVEKQKD…GQVIYRELER (169 aa)). Mg(2+) is bound by residues aspartate 163, glutamate 165, and aspartate 301.

The protein belongs to the WRNexo family.

It is found in the nucleus. In terms of biological role, has exonuclease activity on both single-stranded and duplex templates bearing overhangs, but not blunt ended duplex DNA, and cleaves in a 3'-5' direction. Essential for the formation of DNA replication focal centers. Has an important role in maintaining genome stability. The polypeptide is 3'-5' exonuclease (Drosophila yakuba (Fruit fly)).